Reading from the N-terminus, the 205-residue chain is Isochorismatase domain-containing protein 2 (205 aa).

A phosphoserine mark is found at S7 and S202.

Belongs to the isochorismatase family. In terms of assembly, interacts with CDKN2A.

Its subcellular location is the cytoplasm. It is found in the nucleus. The protein is Isochorismatase domain-containing protein 2 (ISOC2) of Homo sapiens (Human).